A 646-amino-acid chain; its full sequence is mRNA 3'-end-processing protein RNA14 (646 aa).

6 HAT repeats span residues 46–78 (DDYDNSRKLYAELHERFPLYSPLWTMHLQSELQ), 80–114 (NEFDTVEKLLAQCLAGDLENNDLSLWSTYLDYVRR), 128–160 (VVIKAFKLVMDKCATFEPKASSFWNDYLGFLHQ), 171–204 (QRLDMIREVYKKMLCVPFDKLEKMWNQYTLWEQE), 249–281 (ANKNNIPQYVLPCKKNDHTQLEAWLKWIAWEKE), and 290–322 (ALKDRVTYVYKQAIQQLLFEPEIWYDYVMYEFD). Positions 571–599 (DGDPSGVDKSFKKRQIENDENLPDSKRQK) are disordered.

It is found in the nucleus. The protein resides in the cytoplasm. In terms of biological role, component of the cleavage factor IA (CFIA) complex, which is involved in the endonucleolytic cleavage during polyadenylation-dependent pre-mRNA 3'-end formation. This is mRNA 3'-end-processing protein RNA14 (RNA14) from Candida glabrata (strain ATCC 2001 / BCRC 20586 / JCM 3761 / NBRC 0622 / NRRL Y-65 / CBS 138) (Yeast).